A 497-amino-acid chain; its full sequence is B3 domain-containing protein REM1 (497 aa).

3 consecutive DNA-binding regions (TF-B3) follow at residues 7–92 (PSLF…SSES), 142–239 (FLRA…LCSH), and 278–379 (FLTQ…HSKI). A disordered region spans residues 87–135 (AVSSESDDDESDDTDDSESDDESNDTDDSESDDSEDNGEGDSSLVNKEA). The segment covering 91–125 (ESDDDESDDTDDSESDDESNDTDDSESDDSEDNGE) has biased composition (acidic residues).

Specifically expressed in the reproductive meristem.

It localises to the nucleus. In terms of biological role, may play a role in flower development. This is B3 domain-containing protein REM1 (REM1) from Brassica oleracea var. botrytis (Cauliflower).